A 410-amino-acid chain; its full sequence is WD repeat and FYVE domain-containing protein 1 (410 aa).

6 WD repeats span residues 22-61 (GHQD…QYWP), 66-105 (TMAS…NKMN), 112-150 (AHQN…NMLG), 153-192 (FFSS…CSVI), 197-236 (GHEG…GRTL), and 240-279 (GHHD…EEAP). The FYVE-type zinc finger occupies 281–352 (WLESDSCQKC…VCDSCYDSIK (72 aa)). Zn(2+) contacts are provided by cysteine 287, cysteine 290, cysteine 314, cysteine 317, cysteine 322, cysteine 325, cysteine 344, and cysteine 347. The stretch at 364 to 403 (EGKHNISHMSMDVARGLMVTCGTDRVVKIWDMTPVVGCSL) is one WD 7 repeat. Serine 408 bears the Phosphoserine mark.

As to quaternary structure, binds PtdIns3P in vitro with high specificity over other phosphoinositides. Interacts (via WD repeat 2) with tyrosine-phosphorylated TLR3 (via TIR domain) in response to poly(I:C). Interacts with TLR4 in response to LPS. Interacts with TICAM1 in response to poly(I:C).

The protein localises to the early endosome. Functionally, positively regulates TLR3- and TLR4-mediated signaling pathways by bridging the interaction between TLR3 or TLR4 and TICAM1. Promotes TLR3/4 ligand-induced activation of transcription factors IRF3 and NF-kappa-B, as well as the production of IFN-beta and inflammatory cytokines. This chain is WD repeat and FYVE domain-containing protein 1 (WDFY1), found in Bos taurus (Bovine).